A 1366-amino-acid polypeptide reads, in one-letter code: DNA-directed RNA polymerase subunit beta (1366 aa).

The protein belongs to the RNA polymerase beta chain family. In terms of assembly, the RNAP catalytic core consists of 2 alpha, 1 beta, 1 beta' and 1 omega subunit. When a sigma factor is associated with the core the holoenzyme is formed, which can initiate transcription.

It catalyses the reaction RNA(n) + a ribonucleoside 5'-triphosphate = RNA(n+1) + diphosphate. Functionally, DNA-dependent RNA polymerase catalyzes the transcription of DNA into RNA using the four ribonucleoside triphosphates as substrates. This Polynucleobacter necessarius subsp. necessarius (strain STIR1) protein is DNA-directed RNA polymerase subunit beta.